The sequence spans 147 residues: MGFTAQQEALVGSSYETFKKNLPTNSVLFYTVILEIAPTAKDMFSFLKESGPKHSPQLQAHAEKVFALTRDAATQLVAKGEVTLADASLGAVHVQKAVTDPHFVVVKEALLQTVKEAVGADEWSDDLSTAWEGAYDGLATAIKKAMG.

Positions 2-147 constitute a Globin domain; it reads GFTAQQEALV…LATAIKKAMG (146 aa). Tyrosine 30 bears the Nitrated tyrosine mark. Heme b is bound at residue serine 45. Serine 45 is modified (phosphoserine). An O2-binding site is contributed by histidine 61. Heme b-binding residues include lysine 64, histidine 93, and lysine 96. A Nitrated tyrosine modification is found at tyrosine 135.

It belongs to the plant globin family. In terms of assembly, monomer. Post-translationally, nitrated in effective nodules and particularly in hypoxic conditions; this mechanism may play a protective role in the symbiosis by buffering toxic peroxynitrite NO(2)(-). Nitration level decrease during nodule senescence. In terms of processing, phosphorylation at Ser-45 disrupts the molecular environment of its porphyrin ring oxygen binding pocket, thus leading to a reduced oxygen consumption and to the delivery of oxygen O(2) to symbiosomes. In terms of tissue distribution, specifically and strongly expressed in root nodules and at low levels in seedlings.

The protein resides in the cytoplasm. Its subcellular location is the cytosol. The protein localises to the nucleus. In terms of biological role, leghemoglobin that reversibly binds oxygen O(2) through a pentacoordinated heme iron. In root nodules, facilitates the diffusion of oxygen to the bacteroids while preventing the bacterial nitrogenase from being inactivated by buffering dioxygen, nitric oxide and carbon monoxide, and promoting the formation of reactive oxygen species (ROS, e.g. H(2)O(2)). This role is essential for symbiotic nitrogen fixation (SNF). The polypeptide is Leghemoglobin 3 (Lotus japonicus (Lotus corniculatus var. japonicus)).